Here is an 87-residue protein sequence, read N- to C-terminus: Small ribosomal subunit protein bS20 (87 aa).

This sequence belongs to the bacterial ribosomal protein bS20 family.

Binds directly to 16S ribosomal RNA. This is Small ribosomal subunit protein bS20 from Clostridium beijerinckii (strain ATCC 51743 / NCIMB 8052) (Clostridium acetobutylicum).